Reading from the N-terminus, the 592-residue chain is Protein kinase C zeta type (592 aa).

In terms of domain architecture, PB1 spans 15–98; it reads RVRLKAHYGG…EVLIIHVFPS (84 aa). The interval 79–145 is interaction with SQSTM1; the sequence is AFRLVCQGRD…KRFNRGAYCG (67 aa). A Phorbol-ester/DAG-type zinc finger spans residues 130–180; sequence GHLFQAKRFNRGAYCGQCSERIWGLSRQGYRCINCKLLVHKRCHVLVPLTC. The 267-residue stretch at 252–518 folds into the Protein kinase domain; it reads FDLIRVIGRG…FSDIKSHAFF (267 aa). ATP contacts are provided by residues 258 to 266 and Lys281; that span reads IGRGSYAKV. Asp376 functions as the Proton acceptor in the catalytic mechanism. Thr410 is modified (phosphothreonine; by PDPK1 and PI3K). The 72-residue stretch at 519 to 590 folds into the AGC-kinase C-terminal domain; it reads RSIDWDLLEK…INPLLLSAEE (72 aa). Position 560 is a phosphothreonine (Thr560). Ser591 is subject to Phosphoserine.

It belongs to the protein kinase superfamily. AGC Ser/Thr protein kinase family. PKC subfamily. As to quaternary structure, interacts directly with SQSTM1. Forms a ternary complex with SQSTM1 and KCNAB2. Forms another ternary complex with SQSTM1 and GABRR3. Forms a complex with SQSTM1 and MAP2K5. Interacts with PARD6A, PARD6B and PARD6G. Part of a complex with PARD3, PARD6A or PARD6B or PARD6G and CDC42 or RAC1. Interacts with ADAP1/CENTA1. Interacts (via the protein kinase domain) with WWC1. Forms a tripartite complex with WWC1 and DDR1, but predominantly in the absence of collagen. Interacts with PDPK1 (via N-terminal region). Interacts with WDFY2 (via WD repeats 1-3). Interacts with VAMP2. Forms a complex with WDFY2 and VAMP2. Interacts with APPL1. Interacts with WWC1, WWC2 and WWC3. CDH5 is required for its phosphorylation at Thr-410. Phosphorylated by protein kinase PDPK1; phosphorylation is inhibited by the apoptotic C-terminal cleavage product of PKN2. Phosphorylation at Thr-410 by PI3K activates the kinase. In terms of tissue distribution, isoform 1: In brain, highly expressed in cerebellar granule neurons and cerebellar astrocytes (at protein level). Expressed at low levels in testes, lung and kidney. Isoform 2: Specifically expressed in brain where it localizes to cerebellar granule neurons (at protein level).

Its subcellular location is the cytoplasm. The protein localises to the endosome. It is found in the cell junction. It localises to the membrane. The catalysed reaction is L-seryl-[protein] + ATP = O-phospho-L-seryl-[protein] + ADP + H(+). It catalyses the reaction L-threonyl-[protein] + ATP = O-phospho-L-threonyl-[protein] + ADP + H(+). Its activity is regulated as follows. Atypical PKCs (PRKCI and PRKCZ) exhibit an elevated basal enzymatic activity (that may be due to the interaction with SMG1 or SQSTM1) and are not regulated by diacylglycerol, phosphatidylserine, phorbol esters or calcium ions. Two specific sites, Thr-410 (activation loop of the kinase domain) and Thr-560 (turn motif), need to be phosphorylated for its full activation. Phosphatidylinositol 3,4,5-trisphosphate might be a physiological activator. Isoform 2: Constitutively active. Calcium- and diacylglycerol-independent serine/threonine-protein kinase that functions in phosphatidylinositol 3-kinase (PI3K) pathway and mitogen-activated protein (MAP) kinase cascade, and is involved in NF-kappa-B activation, mitogenic signaling, cell proliferation, cell polarity, inflammatory response and maintenance of long-term potentiation (LTP). Upon lipopolysaccharide (LPS) treatment in macrophages, or following mitogenic stimuli, functions downstream of PI3K to activate MAP2K1/MEK1-MAPK1/ERK2 signaling cascade independently of RAF1 activation. Required for insulin-dependent activation of AKT3, but may function as an adapter rather than a direct activator. Upon insulin treatment may act as a downstream effector of PI3K and contribute to the activation of translocation of the glucose transporter SLC2A4/GLUT4 and subsequent glucose transport in adipocytes. In EGF-induced cells, binds and activates MAP2K5/MEK5-MAPK7/ERK5 independently of its kinase activity and can activate JUN promoter through MEF2C. Through binding with SQSTM1/p62, functions in interleukin-1 signaling and activation of NF-kappa-B with the specific adapters RIPK1 and TRAF6. Participates in TNF-dependent transactivation of NF-kappa-B by phosphorylating and activating IKBKB kinase, which in turn leads to the degradation of NF-kappa-B inhibitors. In migrating astrocytes, forms a cytoplasmic complex with PARD6A and is recruited by CDC42 to function in the establishment of cell polarity along with the microtubule motor and dynein. In association with FEZ1, stimulates neuronal differentiation in PC12 cells. In the inflammatory response, is required for the T-helper 2 (Th2) differentiation process, including interleukin production, efficient activation of JAK1 and the subsequent phosphorylation and nuclear translocation of STAT6. May be involved in development of allergic airway inflammation (asthma), a process dependent on Th2 immune response. In the NF-kappa-B-mediated inflammatory response, can relieve SETD6-dependent repression of NF-kappa-B target genes by phosphorylating the RELA subunit at 'Ser-311'. Phosphorylates VAMP2 in vitro. Phosphorylates and activates LRRK1, which phosphorylates RAB proteins involved in intracellular trafficking. Its function is as follows. Involved in late synaptic long term potentiation phase in CA1 hippocampal cells and long term memory maintenance. The chain is Protein kinase C zeta type (Prkcz) from Mus musculus (Mouse).